The following is a 448-amino-acid chain: Deoxyguanosinetriphosphate triphosphohydrolase-like protein (448 aa).

The HD domain maps to 67-260 (RLTHSLEVSQ…MELADDIAYG (194 aa)).

Belongs to the dGTPase family. Type 2 subfamily.

The polypeptide is Deoxyguanosinetriphosphate triphosphohydrolase-like protein (Aliivibrio salmonicida (strain LFI1238) (Vibrio salmonicida (strain LFI1238))).